A 448-amino-acid polypeptide reads, in one-letter code: MKKLYIKTFGCQMNEYDSGKMADLLHADEGMVMTDRPEDADVVLLNTCSIREKAEDKVFSDLGRLRELKKTKPNLLIGVGGCVASQEGQQIVSHAPYVDVVFGPQTLHRLSDLIAKRRETGLFQVDISFPEIEKFDHLPASRQTRGSAYVSIMEGCSKYCSYCVVPYTRGEEVSRSFDDVLTEVAGLASKGVKEIVLLGQNVNAYLGKMGDRQEIADFALLIEYIVEIPGVERIRFTTSHPKEFTQRLIDVYTKVPKLVSHLHLPVQHGSDAMLSAMKRGYTALEFKSIIRKMRAVRPDLTLSSDFIVGFPGETEADFEKLLKMVEELNFDNSFCFIFSPRPGTPAANLHDDTPYEVKLKRLQTLLALVESQANQISQKMLGNIERVLIEGLAKDGINLQGRAENNRVIHFTAPAQNIENLIGQMVDIRITEVLNYTLRGKLVEAYVH.

One can recognise an MTTase N-terminal domain in the interval 2–119 (KKLYIKTFGC…LSDLIAKRRE (118 aa)). Cys11, Cys48, Cys82, Cys156, Cys160, and Cys163 together coordinate [4Fe-4S] cluster. Residues 142-377 (RQTRGSAYVS…LVESQANQIS (236 aa)) form the Radical SAM core domain. Residues 378–444 (QKMLGNIERV…NYTLRGKLVE (67 aa)) form the TRAM domain.

The protein belongs to the methylthiotransferase family. MiaB subfamily. As to quaternary structure, monomer. The cofactor is [4Fe-4S] cluster.

It localises to the cytoplasm. The enzyme catalyses N(6)-dimethylallyladenosine(37) in tRNA + (sulfur carrier)-SH + AH2 + 2 S-adenosyl-L-methionine = 2-methylsulfanyl-N(6)-dimethylallyladenosine(37) in tRNA + (sulfur carrier)-H + 5'-deoxyadenosine + L-methionine + A + S-adenosyl-L-homocysteine + 2 H(+). Its function is as follows. Catalyzes the methylthiolation of N6-(dimethylallyl)adenosine (i(6)A), leading to the formation of 2-methylthio-N6-(dimethylallyl)adenosine (ms(2)i(6)A) at position 37 in tRNAs that read codons beginning with uridine. This Polynucleobacter necessarius subsp. necessarius (strain STIR1) protein is tRNA-2-methylthio-N(6)-dimethylallyladenosine synthase.